Here is a 340-residue protein sequence, read N- to C-terminus: Ribosomal RNA small subunit methyltransferase C (340 aa).

It belongs to the methyltransferase superfamily. RsmC family. Monomer.

Its subcellular location is the cytoplasm. It carries out the reaction guanosine(1207) in 16S rRNA + S-adenosyl-L-methionine = N(2)-methylguanosine(1207) in 16S rRNA + S-adenosyl-L-homocysteine + H(+). Functionally, specifically methylates the guanine in position 1207 of 16S rRNA in the 30S particle. The chain is Ribosomal RNA small subunit methyltransferase C from Vibrio vulnificus (strain CMCP6).